Here is a 70-residue protein sequence, read N- to C-terminus: MQGVQEQIEELQMKMAFQELTVEELNQEVIKLNQLIAHQQHQIQLLIGKLKAMEPSNIATQAEETPPPHY.

This sequence belongs to the SlyX family.

The chain is Protein SlyX homolog from Shewanella sp. (strain MR-7).